Here is a 136-residue protein sequence, read N- to C-terminus: Transport protein particle 20 kDa subunit (136 aa).

The protein belongs to the TRAPP small subunits family. Sedlin subfamily.

It is found in the cytoplasm. It localises to the golgi apparatus. The protein resides in the cis-Golgi network. Its subcellular location is the endoplasmic reticulum. Its function is as follows. Component of the TRAPP I and TRAPP II complexes. TRAPP I plays a key role in the late stages of endoplasmic reticulum to Golgi traffic. TRAPP II seems to play a role in intra-Golgi transport. This chain is Transport protein particle 20 kDa subunit (trs20), found in Schizosaccharomyces pombe (strain 972 / ATCC 24843) (Fission yeast).